The chain runs to 589 residues: Serine/threonine-protein phosphatase 2A 65 kDa regulatory subunit A alpha isoform (589 aa).

At A2 the chain carries N-acetylalanine. 15 HEAT repeats span residues 8-46 (DSLY…GVER), 47-84 (TRSE…GGPE), 85-123 (YVHC…SPSD), 124-161 (LEAH…VSSA), 162-200 (VKAE…ELDN), 201-239 (VKSE…PQED), 240-278 (LEAL…GPEI), 279-321 (TKTD…RENV), 322-360 (IMTQ…GKDS), 361-399 (TIEH…GIRQ), 400-438 (LSQS…GVEF), 439-477 (FDEK…GKEW), 478-516 (AHAT…GQDI), 517-555 (TTKH…DNST), and 556-589 (LQSE…LSLA). Positions 8 to 399 (DSLYPIAVLI…CVNEVIGIRQ (392 aa)) are PP2A subunit B binding. Positions 47-321 (TRSELLPFLT…NLSADCRENV (275 aa)) are polyoma small and medium T antigens Binding. The SV40 small T antigen binding stretch occupies residues 85–239 (YVHCLLPPLE…NIAQLLPQED (155 aa)). N6-acetyllysine is present on K280. The tract at residues 400–589 (LSQSLLPAIV…QEALTVLSLA (190 aa)) is PP2A subunit C binding.

This sequence belongs to the phosphatase 2A regulatory subunit A family. As to quaternary structure, PP2A consists of a common heterodimeric core enzyme, composed of PPP2CA a 36 kDa catalytic subunit (subunit C) and PPP2R1A a 65 kDa constant regulatory subunit (PR65 or subunit A), that associates with a variety of regulatory subunits. Proteins that associate with the core dimer include three families of regulatory subunits B (the R2/B/PR55/B55, R3/B''/PR72/PR130/PR59 and R5/B'/B56 families), the 48 kDa variable regulatory subunit, viral proteins, and cell signaling molecules. Found in a complex with at least ARL2, PPP2CB, PPP2R1A, PPP2R2A, PPP2R5E and TBCD. Interacts with the PP2A C catalytic subunit PPP2CA. Interacts with the PP2A B subunit PPP2R2A. Interacts with the PP2A B subunit PPP2R5D. Interacts with FOXO1; the interaction dephosphorylates FOXO1 on AKT-mediated phosphorylation sites. Interacts with IPO9. Interacts with TP53 and SGO1. Interacts with PLA2G16; this interaction might decrease PP2A activity. Interacts with CTTNBP2NL. Interacts with GNA12; the interaction promotes protein phosphatase 2A activation causing dephosphorylation of MAPT. Interacts with CIP2A; this interaction stabilizes CIP2A. Interacts with PABIR1/FAM122A. Interacts with ADCY8; antagonizes interaction between ADCY8 and calmodulin. Interacts with CRTC3 (when phosphorylated at 'Ser-391'). Interacts with SPRY2. Part of the core of STRIPAK complexes composed of PP2A catalytic and scaffolding subunits, the striatins (PP2A regulatory subunits), the striatin-associated proteins MOB4, STRIP1 and STRIP2, PDCD10 and members of the STE20 kinases, such as STK24 and STK26. Component of the Integrator-PP2A (INTAC) complex, composed of the Integrator core complex and protein phosphatase 2A subunits PPP2CA and PPP2R1A.

It localises to the cytoplasm. It is found in the nucleus. Its subcellular location is the chromosome. The protein localises to the centromere. The protein resides in the lateral cell membrane. It localises to the cell projection. It is found in the dendrite. Functionally, the PR65 subunit of protein phosphatase 2A serves as a scaffolding molecule to coordinate the assembly of the catalytic subunit and a variable regulatory B subunit. Upon interaction with GNA12 promotes dephosphorylation of microtubule associated protein TAU/MAPT. Required for proper chromosome segregation and for centromeric localization of SGO1 in mitosis. Together with RACK1 adapter, mediates dephosphorylation of AKT1 at 'Ser-473', preventing AKT1 activation and AKT-mTOR signaling pathway. Dephosphorylation of AKT1 is essential for regulatory T-cells (Treg) homeostasis and stability. Part of the striatin-interacting phosphatase and kinase (STRIPAK) complexes. STRIPAK complexes have critical roles in protein (de)phosphorylation and are regulators of multiple signaling pathways including Hippo, MAPK, nuclear receptor and cytoskeleton remodeling. Different types of STRIPAK complexes are involved in a variety of biological processes such as cell growth, differentiation, apoptosis, metabolism and immune regulation. Key mediator of a quality checkpoint during transcription elongation as part of the Integrator-PP2A (INTAC) complex. The INTAC complex drives premature transcription termination of transcripts that are unfavorably configured for transcriptional elongation: within the INTAC complex, acts as a scaffolding subunit for PPP2CA, which catalyzes dephosphorylation of the C-terminal domain (CTD) of Pol II subunit POLR2A/RPB1 and SUPT5H/SPT5, thereby preventing transcriptional elongation. Regulates the recruitment of the SKA complex to kinetochores. This Bos taurus (Bovine) protein is Serine/threonine-protein phosphatase 2A 65 kDa regulatory subunit A alpha isoform (PPP2R1A).